The sequence spans 150 residues: UPF0756 membrane protein HD_1071 (150 aa).

Transmembrane regions (helical) follow at residues 1–21, 52–72, 82–102, and 114–134; these read MSLQFNPIGLFLVALILLGVL, YGLTIGIIILTIGVLSPIVSG, ILSWKMALAISIGIFVAWLGG, and IITGLLIGTIIGIAFFGGIPV.

Belongs to the UPF0756 family.

The protein resides in the cell membrane. In Haemophilus ducreyi (strain 35000HP / ATCC 700724), this protein is UPF0756 membrane protein HD_1071.